We begin with the raw amino-acid sequence, 53 residues long: Large ribosomal subunit protein bL33A (53 aa).

The protein belongs to the bacterial ribosomal protein bL33 family.

The polypeptide is Large ribosomal subunit protein bL33A (rpmG1) (Mycoplasma pneumoniae (strain ATCC 29342 / M129 / Subtype 1) (Mycoplasmoides pneumoniae)).